A 432-amino-acid polypeptide reads, in one-letter code: Malate dehydrogenase [NADP], chloroplastic (432 aa).

A chloroplast-targeting transit peptide spans 1–40 (MGLSTVYSPAGPRLVPAPLGRCRSAQPRRPRRAPLATVRC). The disordered stretch occupies residues 18-37 (PLGRCRSAQPRRPRRAPLAT). Cys-67 and Cys-72 are oxidised to a cystine. 96–102 (GAAGMIS) contacts NADP(+). Substrate is bound by residues Arg-177 and Arg-183. An NADP(+)-binding site is contributed by Asn-190. Position 197 (Gln-197) interacts with NAD(+). Position 214-216 (214-216 (VGN)) interacts with NADP(+). Residues Asn-216 and Arg-247 each coordinate substrate. His-272 functions as the Proton acceptor in the catalytic mechanism. Cys-408 and Cys-420 are joined by a disulfide.

This sequence belongs to the LDH/MDH superfamily. MDH type 2 family. In terms of assembly, homodimer.

The protein resides in the plastid. The protein localises to the chloroplast. The catalysed reaction is (S)-malate + NADP(+) = oxaloacetate + NADPH + H(+). With respect to regulation, chloroplast NADP-MDH is activated upon illumination. In order to be enzymatically active, disulfide bridges on the protein must be reduced by thioredoxin which receives electrons from ferredoxin and the electron transport system of photosynthesis. Functionally, the chloroplastic, NADP-dependent form is essential for the photosynthesis C4 cycle, which allows plants to circumvent the problem of photorespiration. In C4 plants, NADP-MDH activity acts to convert oxaloacetate to malate in chloroplasts of mesophyll cells for transport to the bundle sheath cells. In Zea mays (Maize), this protein is Malate dehydrogenase [NADP], chloroplastic.